A 253-amino-acid chain; its full sequence is A-type ATP synthase subunit B (253 aa).

This sequence belongs to the ATPase alpha/beta chains family. Has multiple subunits with at least A(3), B(3), C, D, E, F, H, I and proteolipid K(x).

It localises to the cell membrane. Functionally, component of the A-type ATP synthase that produces ATP from ADP in the presence of a proton gradient across the membrane. The B chain is a regulatory subunit. The chain is A-type ATP synthase subunit B from Methanothermococcus thermolithotrophicus (Methanococcus thermolithotrophicus).